A 556-amino-acid chain; its full sequence is Probable Xaa-Pro aminopeptidase SS1G_06948 (556 aa).

Asp305, Asp316, Glu460, and Glu501 together coordinate Mn(2+).

This sequence belongs to the peptidase M24B family. Mn(2+) is required as a cofactor.

The enzyme catalyses Release of any N-terminal amino acid, including proline, that is linked to proline, even from a dipeptide or tripeptide.. Catalyzes the removal of a penultimate prolyl residue from the N-termini of peptides. This is Probable Xaa-Pro aminopeptidase SS1G_06948 from Sclerotinia sclerotiorum (strain ATCC 18683 / 1980 / Ss-1) (White mold).